Reading from the N-terminus, the 118-residue chain is 5-hydroxyisourate hydrolase (118 aa).

3 residues coordinate substrate: H7, R46, and Y115.

Belongs to the transthyretin family. 5-hydroxyisourate hydrolase subfamily. As to quaternary structure, homotetramer.

The enzyme catalyses 5-hydroxyisourate + H2O = 5-hydroxy-2-oxo-4-ureido-2,5-dihydro-1H-imidazole-5-carboxylate + H(+). Functionally, catalyzes the hydrolysis of 5-hydroxyisourate (HIU) to 2-oxo-4-hydroxy-4-carboxy-5-ureidoimidazoline (OHCU). This Brucella suis biovar 1 (strain 1330) protein is 5-hydroxyisourate hydrolase.